The following is a 352-amino-acid chain: Forkhead box protein D5 (352 aa).

Disordered regions lie at residues 1–32 and 47–92; these read MSLSQESGAHHDPQDYPVVSDEEDEIDILGED and HSEM…GKAK. A compositionally biased stretch (acidic residues) spans 20–32; it reads SDEEDEIDILGED. The span at 73–82 shows a compositional bias: low complexity; the sequence is ESEGGTSKDS. Residues 97–191 constitute a DNA-binding region (fork-head); the sequence is KPPYSYIALI…DNGSFLRRRK (95 aa).

Expression begins in the newly forming dorsal mesoderm and is maintained during gastrulation at the dorsal blastopore lip (Spemann organizer). At the early neurula stages, expressed in a row of cells along the dorsal midline that are destined to become the fllor plate of the neural tube. At late neurula, expressed within the anterior and posterior poles of the embryo. After neural closure, expression is detected only in the tailtip, the otic vesicle and at the midbrain/hindbrain boundary.

Its subcellular location is the nucleus. Functionally, transcriptional repressor. In Xenopus tropicalis (Western clawed frog), this protein is Forkhead box protein D5.